The chain runs to 1061 residues: Eukaryotic translation initiation factor 3 subunit A (1061 aa).

A compositionally biased stretch (polar residues) spans 114-126; the sequence is QSSIEATTGSSSV. The segment at 114-133 is disordered; the sequence is QSSIEATTGSSSVEDLEASE. The PCI domain maps to 339–523; sequence LQKAATFVVL…GVLSFDVDVF (185 aa). 2 coiled-coil regions span residues 609–724 and 789–906; these read EVIQ…KRLD and RADL…AAAA. Basic and acidic residues predominate over residues 828 to 901; it reads REKREREEKE…EAMARRRAEK (74 aa). Residues 828–1061 form a disordered region; sequence REKREREEKE…KYVPKFRREG (234 aa). 2 stretches are compositionally biased toward pro residues: residues 950 to 962 and 1000 to 1011; these read SGPPPARAAPPPI and APPPERSGPPPR.

This sequence belongs to the eIF-3 subunit A family. As to quaternary structure, component of the eukaryotic translation initiation factor 3 (eIF-3) complex.

The protein resides in the cytoplasm. In terms of biological role, RNA-binding component of the eukaryotic translation initiation factor 3 (eIF-3) complex, which is involved in protein synthesis of a specialized repertoire of mRNAs and, together with other initiation factors, stimulates binding of mRNA and methionyl-tRNAi to the 40S ribosome. The eIF-3 complex specifically targets and initiates translation of a subset of mRNAs involved in cell proliferation. The sequence is that of Eukaryotic translation initiation factor 3 subunit A from Chaetomium globosum (strain ATCC 6205 / CBS 148.51 / DSM 1962 / NBRC 6347 / NRRL 1970) (Soil fungus).